A 195-amino-acid polypeptide reads, in one-letter code: Cytochrome c biogenesis ATP-binding export protein CcmA (195 aa).

The ABC transporter domain occupies 1–195 (MLSLHQLQFN…IKSAQILQLV (195 aa)). 33 to 40 (GANGSGKS) serves as a coordination point for ATP.

The protein belongs to the ABC transporter superfamily. CcmA exporter (TC 3.A.1.107) family. The complex is composed of two ATP-binding proteins (CcmA) and two transmembrane proteins (CcmB).

The protein localises to the cell inner membrane. The catalysed reaction is heme b(in) + ATP + H2O = heme b(out) + ADP + phosphate + H(+). In terms of biological role, part of the ABC transporter complex CcmAB involved in the biogenesis of c-type cytochromes; once thought to export heme, this seems not to be the case, but its exact role is uncertain. Responsible for energy coupling to the transport system. The sequence is that of Cytochrome c biogenesis ATP-binding export protein CcmA from Rickettsia felis (strain ATCC VR-1525 / URRWXCal2) (Rickettsia azadi).